Here is a 122-residue protein sequence, read N- to C-terminus: NADH-ubiquinone oxidoreductase chain 3 (122 aa).

3 consecutive transmembrane segments (helical) span residues 12 to 32, 66 to 86, and 91 to 111; these read VLIF…LSYV, LVAI…PWAV, and VTIF…VGFI.

This sequence belongs to the complex I subunit 3 family.

The protein localises to the mitochondrion membrane. The enzyme catalyses a ubiquinone + NADH + 5 H(+)(in) = a ubiquinol + NAD(+) + 4 H(+)(out). Its function is as follows. Core subunit of the mitochondrial membrane respiratory chain NADH dehydrogenase (Complex I) that is believed to belong to the minimal assembly required for catalysis. Complex I functions in the transfer of electrons from NADH to the respiratory chain. The immediate electron acceptor for the enzyme is believed to be ubiquinone. This is NADH-ubiquinone oxidoreductase chain 3 (NAD3) from Reclinomonas americana.